A 136-amino-acid chain; its full sequence is uncharacterized protein (136 aa).

A disordered region spans residues 1 to 33 (MRDHLPPGLPPDPFADDPCDPSAALEAVEPGQP).

The protein to M.leprae ML0386.

This is an uncharacterized protein from Mycobacterium tuberculosis (strain CDC 1551 / Oshkosh).